The primary structure comprises 241 residues: Large ribosomal subunit protein uL2 (241 aa).

Residues 1 to 12 (MGKRLISQRRGR) are compositionally biased toward basic residues. Disordered regions lie at residues 1–21 (MGKRLISQRRGRGTPTYRSAS) and 200–241 (AVDH…GKRR).

It belongs to the universal ribosomal protein uL2 family. As to quaternary structure, part of the 50S ribosomal subunit. Forms a bridge to the 30S subunit in the 70S ribosome.

Its function is as follows. One of the primary rRNA binding proteins. Required for association of the 30S and 50S subunits to form the 70S ribosome, for tRNA binding and peptide bond formation. It has been suggested to have peptidyltransferase activity; this is somewhat controversial. Makes several contacts with the 16S rRNA in the 70S ribosome. This chain is Large ribosomal subunit protein uL2, found in Methanothermobacter thermautotrophicus (strain ATCC 29096 / DSM 1053 / JCM 10044 / NBRC 100330 / Delta H) (Methanobacterium thermoautotrophicum).